Reading from the N-terminus, the 308-residue chain is Aspartate carbamoyltransferase catalytic subunit (308 aa).

Residues Arg-57 and Thr-58 each contribute to the carbamoyl phosphate site. Residue Lys-86 participates in L-aspartate binding. 3 residues coordinate carbamoyl phosphate: Arg-107, His-135, and Gln-138. Residues Arg-168 and Arg-229 each contribute to the L-aspartate site. The carbamoyl phosphate site is built by Leu-268 and Pro-269.

This sequence belongs to the aspartate/ornithine carbamoyltransferase superfamily. ATCase family. As to quaternary structure, heterooligomer of catalytic and regulatory chains.

The catalysed reaction is carbamoyl phosphate + L-aspartate = N-carbamoyl-L-aspartate + phosphate + H(+). It participates in pyrimidine metabolism; UMP biosynthesis via de novo pathway; (S)-dihydroorotate from bicarbonate: step 2/3. Functionally, catalyzes the condensation of carbamoyl phosphate and aspartate to form carbamoyl aspartate and inorganic phosphate, the committed step in the de novo pyrimidine nucleotide biosynthesis pathway. The sequence is that of Aspartate carbamoyltransferase catalytic subunit from Pyrococcus furiosus (strain ATCC 43587 / DSM 3638 / JCM 8422 / Vc1).